Here is a 438-residue protein sequence, read N- to C-terminus: Probable phosphoglucosamine mutase (438 aa).

Catalysis depends on S91, which acts as the Phosphoserine intermediate. Residues S91, D228, D230, and D232 each contribute to the Mg(2+) site. A Phosphoserine modification is found at S91.

This sequence belongs to the phosphohexose mutase family. It depends on Mg(2+) as a cofactor. Activated by phosphorylation.

The enzyme catalyses alpha-D-glucosamine 1-phosphate = D-glucosamine 6-phosphate. Functionally, catalyzes the conversion of glucosamine-6-phosphate to glucosamine-1-phosphate. The protein is Probable phosphoglucosamine mutase of Methanocella arvoryzae (strain DSM 22066 / NBRC 105507 / MRE50).